A 503-amino-acid chain; its full sequence is Maturase K (503 aa).

Belongs to the intron maturase 2 family. MatK subfamily.

The protein resides in the plastid. Its subcellular location is the chloroplast. In terms of biological role, usually encoded in the trnK tRNA gene intron. Probably assists in splicing its own and other chloroplast group II introns. This chain is Maturase K, found in Aethionema cordifolium (Lebanon stonecress).